A 667-amino-acid polypeptide reads, in one-letter code: MTAYSPADSNAEARLLSGGSDPISDTENLLDLAYEVGTSSSDNTRYDRESENDEEEIGVGWEDTTSSSLNKRMCKSATFHDFCDDSEYSRRPVTTLHEEDFDEEEEDEFEDASDRRNLDEDDVEYEDEDDEDDIVVEEEEITPEDIEHSPTGVTTQTTPPSNNTSKSKKKKKRKSDEEDGLRKMKKSSTFASFLNMFVSRRRSGRDSGERLMSRSTCMLRPSISLSVVQESMILGSDGESVEVSPCTSDQTPTGVPPRYIVNVKMRQKTARKWSEEEIQKRLSLPADLRLPVAVVDKLNRTPTLDQPLTRKNRRASLSEIGFGKLETYEKLDKLGEGTYATVFRGRSILTNKFVALKEIRLEQEEGAPCTAIREVSLLRNLRHANVVTLHDIIHTDRLLTLVFEYVDRDLKQYMDSCNNAMQMNNIRLFLYQLLRGLAYCHQRRVLHRDLKPQNLLITAKGELKLADFGLARAKSVPTKTYSNEVVTLWYRPPDVLLGSTDYSTHIDMWGVGCILFEMIAGRALFPGGTPTEQLGLIFRTLGSPRPDRHPTICEKPTFYPYANRHYNPDPLCRQIPRIDAHGFELLMKFLQYEGKDRVSAAEAVKHPFLRTIAVKCCHLRDEQSVLEADGIHIERELLASDHHHSSRRHHRGTLVKDKYRMHSSHHT.

Disordered regions lie at residues Met-1–Asn-70 and Asp-85–Met-184. Composition is skewed to acidic residues over residues Glu-99 to Asp-111 and Asp-119 to Glu-144. The segment covering Thr-151–Thr-164 has biased composition (polar residues). The Protein kinase domain occupies Tyr-328 to Leu-609. ATP is bound by residues Leu-334 to Val-342 and Lys-357. Catalysis depends on Asp-449, which acts as the Proton acceptor. Mg(2+) is bound by residues Asn-454 and Asp-467. A disordered region spans residues His-642–Thr-667. Residues His-644–Thr-653 show a composition bias toward basic residues.

This sequence belongs to the protein kinase superfamily. CMGC Ser/Thr protein kinase family. CDC2/CDKX subfamily. In terms of assembly, interacts with cyy-1; the interaction is required to activate pct-1. Mg(2+) serves as cofactor.

The protein localises to the cytoplasm. The protein resides in the cell projection. It localises to the dendrite. Its subcellular location is the axon. The catalysed reaction is L-seryl-[protein] + ATP = O-phospho-L-seryl-[protein] + ADP + H(+). The enzyme catalyses L-threonyl-[protein] + ATP = O-phospho-L-threonyl-[protein] + ADP + H(+). Functionally, serine/threonine-protein kinase, which, in association with cyy-1, regulates the trafficking of synaptic vesicles in the DA9 motor neuron and probably also in the DD motor neurons and in RIA interneurons. Its function is as follows. Sufficient for synaptic vesicle trafficking in the DA9 motor neuron. The sequence is that of Cyclin-dependent kinase 17 from Caenorhabditis elegans.